We begin with the raw amino-acid sequence, 442 residues long: O-methyltransferase pgmB (442 aa).

Asp291 contacts S-adenosyl-L-methionine. Catalysis depends on His341, which acts as the Proton acceptor.

It belongs to the class I-like SAM-binding methyltransferase superfamily. Cation-independent O-methyltransferase family.

It functions in the pathway pigment biosynthesis. It participates in secondary metabolite biosynthesis. O-methyltransferase; part of the gene cluster that mediates the biosynthesis of pleosporalin A, ascomycone A, as well as a third cryptic naphthoquinone derived pigment, all responsible for the coloration of conidia. Specifically methylates position C-6 of the pgmA product 3-acetonyl-1,6,8-trihydroxy-2-naphthaldehyde to yield fusarubinaldehyde. The pathway begins with the biosynthesis of the cyclized heptaketide 3-acetonyl-1,6,8-trihydroxy-2-naphthaldehyde by the NR-PKS pgmA. The C-6 hydroxyl group is further methylated by the O-methyltransferase pgmB to yield fusarubinaldehyde which is in turn oxidized by the cytochrome P450 monooxygenase pgmC at C-9. The C-1 hydroxyl group is then methylated spontaneously. Although pgmE, pgmD and pgmH are essential for the production of pleosporalin A, it is not the case for the 2 other final products and it remains difficult to assign a specific function to each enzyme. PgmF and pgmG seem not to be involved in pigment biosynthesis although they were regulated by the cluster-specific transcription factor pgmR. This is O-methyltransferase pgmB from Aspergillus terreus.